We begin with the raw amino-acid sequence, 198 residues long: Outer-membrane lipoprotein carrier protein (198 aa).

The signal sequence occupies residues 1–16 (MKKWLVVFFLSASALA).

The protein belongs to the LolA family. Monomer.

The protein localises to the periplasm. Participates in the translocation of lipoproteins from the inner membrane to the outer membrane. Only forms a complex with a lipoprotein if the residue after the N-terminal Cys is not an aspartate (The Asp acts as a targeting signal to indicate that the lipoprotein should stay in the inner membrane). The polypeptide is Outer-membrane lipoprotein carrier protein (Vibrio vulnificus (strain YJ016)).